Here is a 288-residue protein sequence, read N- to C-terminus: Ankyrin repeat and SOCS box protein 8 (288 aa).

At serine 17 the chain carries Phosphoserine. 4 ANK repeats span residues 52–81 (GTLK…EVNA), 85–113 (YNRT…NPNA), 117–146 (NRDT…SVNA), and 150–179 (NNDT…EVRV). Positions 235 to 288 (QLCEKLTVLCSAPGTLKTLSRYAVRRSLGLQYLPDAVKGLPLPASLKEYLLLIE) constitute an SOCS box domain.

The protein belongs to the ankyrin SOCS box (ASB) family. Interacts with TBK1; this interaction promotes TBK1 proteasomal degradation. Post-translationally, phosphorylated by TBK1.

The protein localises to the cytoplasm. It participates in protein modification; protein ubiquitination. In terms of biological role, may be a substrate-recognition component of a SCF-like ECS (Elongin-Cullin-SOCS-box protein) E3 ubiquitin-protein ligase complex which mediates the ubiquitination and subsequent proteasomal degradation of target proteins. Inhibits IFN-beta production through the IRF3 signaling pathway by targeting TBK1 via 'Lys-48'-linked ubiquitination, leading to its proteasomal degradation. This Bos taurus (Bovine) protein is Ankyrin repeat and SOCS box protein 8 (ASB8).